Reading from the N-terminus, the 380-residue chain is ER-phagy receptor 1 (380 aa).

The region spanning 9-74 is the J domain; the sequence is DCYEILQVNH…DKRKWHEKDY (66 aa). Residues 270 to 294 form a C2H2-type zinc finger; it reads IMCMVCNKNFRSQNQLENHENSKKH. The tract at residues 307-337 is disordered; that stretch reads KHAKEAQKNAESNKQPEDAPSESPYSNKVSS. The residue at position 344 (S344) is a Phosphoserine. Residues 352–355 carry the AIM motif; it reads FTFV. Residues 361–367 carry the FFAT motif; the sequence is EFYTASE.

Interacts (via the AIM motif) with atg8. Interacts (via the FFAT motif) with the vesicle-associated membrane protein-associated protein (VAP) family proteins scs2 and scs22.

It localises to the endoplasmic reticulum. The protein resides in the preautophagosomal structure. Reticulophagy receptor required for autophagosomal sequestration of endoplasmic reticulum (ER) membranes during ER stress. Confers resistance to ER stress by promoting the autophagic degradation of the ER (ER-phagy or reticulophagy). Acts as a bridging molecule to mediate the association between atg8 on the autophagic membrane and the vesicle-associated membrane protein-associated proteins (VAPs) scs2 and scs22 on the ER. May play a role in meiosis. The chain is ER-phagy receptor 1 from Schizosaccharomyces pombe (strain 972 / ATCC 24843) (Fission yeast).